Here is a 420-residue protein sequence, read N- to C-terminus: Cell division protein FtsA (420 aa).

This sequence belongs to the FtsA/MreB family. In terms of assembly, self-interacts. Interacts with FtsZ.

It localises to the cell inner membrane. Its function is as follows. Cell division protein that is involved in the assembly of the Z ring. May serve as a membrane anchor for the Z ring. This is Cell division protein FtsA from Escherichia coli O157:H7.